The following is a 125-amino-acid chain: MQMGRPTLLPCLLLLLVLSTQACFIRNCPEGGKRDVHMIQPTKPCMNCSFGQCVGPRVCCGAGRCEIGSTEADRCEEENEDPVPCKVLGQHCVLNNPGNVNGNCVDGGIGICCVDDTCAIHRRCD.

Positions 1–22 (MQMGRPTLLPCLLLLLVLSTQA) are cleaved as a signal peptide. Cysteine 23 and cysteine 28 are joined by a disulfide. Glycine amide is present on glycine 31. The propeptide occupies 32 to 39 (GKRDVHMI). Intrachain disulfides connect cysteine 45-cysteine 85, cysteine 48-cysteine 59, cysteine 53-cysteine 75, cysteine 60-cysteine 65, cysteine 92-cysteine 112, cysteine 104-cysteine 124, and cysteine 113-cysteine 118.

It belongs to the vasopressin/oxytocin family. Expressed by the venom gland.

It localises to the secreted. Functionally, targets vasopressin-oxytocin related receptors. The protein is Conopressin-conophysin, isoform 1 of Conus monile (Necklace cone).